Consider the following 250-residue polypeptide: 5-oxoprolinase subunit A (250 aa).

Belongs to the LamB/PxpA family. Forms a complex composed of PxpA, PxpB and PxpC.

The catalysed reaction is 5-oxo-L-proline + ATP + 2 H2O = L-glutamate + ADP + phosphate + H(+). In terms of biological role, catalyzes the cleavage of 5-oxoproline to form L-glutamate coupled to the hydrolysis of ATP to ADP and inorganic phosphate. In Staphylococcus aureus (strain MRSA252), this protein is 5-oxoprolinase subunit A.